The following is a 438-amino-acid chain: Exodeoxyribonuclease 7 large subunit (438 aa).

The tract at residues 406–438 is disordered; it reads ATSTGPTDDIPSSAARLPASPAPDARPASGPES.

It belongs to the XseA family. As to quaternary structure, heterooligomer composed of large and small subunits.

The protein localises to the cytoplasm. It catalyses the reaction Exonucleolytic cleavage in either 5'- to 3'- or 3'- to 5'-direction to yield nucleoside 5'-phosphates.. Bidirectionally degrades single-stranded DNA into large acid-insoluble oligonucleotides, which are then degraded further into small acid-soluble oligonucleotides. This is Exodeoxyribonuclease 7 large subunit from Clavibacter sepedonicus (Clavibacter michiganensis subsp. sepedonicus).